Here is a 161-residue protein sequence, read N- to C-terminus: Allophycocyanin beta chain (161 aa).

Asparagine 71 is modified (N4-methylasparagine). Cysteine 81 is a binding site for (2R,3E)-phycocyanobilin.

The protein belongs to the phycobiliprotein family. Heterodimer of an alpha and a beta chain. Post-translationally, contains one covalently linked phycocyanobilin chromophore.

The protein localises to the cellular thylakoid membrane. Functionally, light-harvesting photosynthetic bile pigment-protein from the phycobiliprotein complex. Allophycocyanin has a maximum absorption at approximately 650 nanometers. The sequence is that of Allophycocyanin beta chain (apcB) from Arthrospira platensis (Spirulina platensis).